The chain runs to 359 residues: EGF-like domain containing protein 2 (359 aa).

The first 20 residues, 1-20, serve as a signal peptide directing secretion; the sequence is MPPFISHFFLLSTFASLALC. EGF-like domains follow at residues 21-55 and 61-93; these read SFYCKNPGYPCLNGGTCLYNGECNCTSGFRGFNCG and ISAACTVECHNKGICYNGDKCYCTKDYMGPTCQ. 6 disulfides stabilise this stretch: Cys-24–Cys-37, Cys-31–Cys-43, Cys-45–Cys-54, Cys-65–Cys-75, Cys-69–Cys-81, and Cys-83–Cys-92.

Prismatic layer of shell (at protein level). Expressed primarily in the mantle with highest level in the mantle edge and lower level in the mantle pallium.

Its subcellular location is the secreted. This chain is EGF-like domain containing protein 2, found in Margaritifera margaritifera (Freshwater pearl mussel).